Here is a 1869-residue protein sequence, read N- to C-terminus: Chitin synthase 6 (1869 aa).

The disordered stretch occupies residues 1–23 (MAMNLPPLAGSGGAHTQPSLPAL). The region spanning 1–778 (MAMNLPPLAG…EIAHLSEASL (778 aa)) is the Myosin motor domain. 104 to 111 (GESGSGKS) serves as a coordination point for ATP. Asn123, Asn417, Asn426, and Asn557 each carry an N-linked (GlcNAc...) asparagine glycan. 2 disordered regions span residues 593 to 612 (KPMRTPSVMSRKTARTARNQ) and 620 to 640 (AEEELEKLSENNSQAGGAAKA). Over residues 629–640 (ENNSQAGGAAKA) the composition is skewed to low complexity. Asn630 and Asn657 each carry an N-linked (GlcNAc...) asparagine glycan. The tract at residues 655–679 (LDNVTKAVADPSTNSYFVFCLKPND) is actin-binding. 2 consecutive transmembrane segments (helical) span residues 886–906 (WLFMVYLLTWFIPDFLIRFIG) and 925–945 (LIIWLSCLLAAFFIVVFPMLI). Positions 949-1010 (QHVYSAAELS…YAGKDATSLF (62 aa)) constitute a Cytochrome b5 heme-binding domain. N-linked (GlcNAc...) asparagine glycosylation is found at Asn1037, Asn1062, and Asn1165. Residues 1201-1221 (LVLAISIMLVTIIAFKFFAAL) traverse the membrane as a helical segment. N-linked (GlcNAc...) asparagine glycosylation is found at Asn1458 and Asn1564. The next 3 helical transmembrane spans lie at 1596–1616 (LSTVLQPVTMAYIVYLIVMVI), 1622–1642 (VPVTAFILIAAVFGLQAIIFI), and 1649–1669 (MIGWMVLYILAIPVFSFGLPL). Residue Asn1778 is glycosylated (N-linked (GlcNAc...) asparagine). A DEK-C domain is found at 1811 to 1866 (LPSDDALLAEIREILRTADLMTVTKKGIKQELERRFGVPLDAKRAYINSATEALLS).

It in the N-terminal section; belongs to the TRAFAC class myosin-kinesin ATPase superfamily. Myosin family. This sequence in the C-terminal section; belongs to the chitin synthase family. Class V subfamily.

It localises to the cell membrane. It catalyses the reaction [(1-&gt;4)-N-acetyl-beta-D-glucosaminyl](n) + UDP-N-acetyl-alpha-D-glucosamine = [(1-&gt;4)-N-acetyl-beta-D-glucosaminyl](n+1) + UDP + H(+). Functionally, polymerizes chitin, a structural polymer of the cell wall and septum, by transferring the sugar moiety of UDP-GlcNAc to the non-reducing end of the growing chitin polymer. Plays a role in cell wall integrity and is involved in tolerance to hyperosmotic conditions. Required to successfully penetrate the host plants and thus plays a key role in pathogenicity. The chain is Chitin synthase 6 from Verticillium dahliae (strain VdLs.17 / ATCC MYA-4575 / FGSC 10137) (Verticillium wilt).